The primary structure comprises 377 residues: Nitric oxide reductase FlRd-NAD(+) reductase (377 aa).

Belongs to the FAD-dependent oxidoreductase family. It depends on FAD as a cofactor.

The protein localises to the cytoplasm. It catalyses the reaction 2 reduced [nitric oxide reductase rubredoxin domain] + NAD(+) + H(+) = 2 oxidized [nitric oxide reductase rubredoxin domain] + NADH. It participates in nitrogen metabolism; nitric oxide reduction. Its function is as follows. One of at least two accessory proteins for anaerobic nitric oxide (NO) reductase. Reduces the rubredoxin moiety of NO reductase. The polypeptide is Nitric oxide reductase FlRd-NAD(+) reductase (Escherichia coli (strain 55989 / EAEC)).